A 941-amino-acid polypeptide reads, in one-letter code: UvrABC system protein A (941 aa).

Residue 37 to 44 coordinates ATP; that stretch reads GLSGSGKS. The C4-type zinc finger occupies 260–287; it reads CFKCKMSFEELEPLSFSFNSPKGACESC. ABC transporter domains lie at 316–585 and 605–937; these read IFGY…NNHS and KEKH…KFLA. 637–644 is a binding site for ATP; it reads GVSGSGKS. Residues 737–763 form a C4-type zinc finger; it reads CEKCQGDGDIKIEMHFLPDVLVQCDSC.

It belongs to the ABC transporter superfamily. UvrA family. In terms of assembly, forms a heterotetramer with UvrB during the search for lesions.

It is found in the cytoplasm. Its function is as follows. The UvrABC repair system catalyzes the recognition and processing of DNA lesions. UvrA is an ATPase and a DNA-binding protein. A damage recognition complex composed of 2 UvrA and 2 UvrB subunits scans DNA for abnormalities. When the presence of a lesion has been verified by UvrB, the UvrA molecules dissociate. The protein is UvrABC system protein A of Helicobacter pylori (strain J99 / ATCC 700824) (Campylobacter pylori J99).